Reading from the N-terminus, the 69-residue chain is Toxin Tz2 (69 aa).

Residues 1-7 (IEVVMGG) form the signal peptide. Positions 8–69 (KEGYLLDKSN…KMWDLKTNKC (62 aa)) constitute an LCN-type CS-alpha/beta domain. 4 disulfide bridges follow: Cys-19–Cys-69, Cys-23–Cys-45, Cys-31–Cys-50, and Cys-35–Cys-52.

Belongs to the long (4 C-C) scorpion toxin superfamily. Sodium channel inhibitor family. Beta subfamily. Expressed by the venom gland.

Its subcellular location is the secreted. In terms of biological role, beta toxins bind voltage-independently at site-4 of sodium channels (Nav) and shift the voltage of activation toward more negative potentials thereby affecting sodium channel activation and promoting spontaneous and repetitive firing. This chain is Toxin Tz2, found in Tityus zulianus (Venezuelan scorpion).